The following is a 518-amino-acid chain: Integrator complex subunit 14 (518 aa).

Positions Pro2–Leu204 constitute a VWFA domain. Mg(2+) contacts are provided by Ser10, Ser12, and Thr86. A disordered region spans residues Ser373–Lys394. Over residues Asp374–Lys386 the composition is skewed to basic and acidic residues.

This sequence belongs to the Integrator subunit 14 family. In terms of assembly, component of the Integrator complex, composed of core subunits INTS1, INTS2, INTS3, INTS4, INTS5, INTS6, INTS7, INTS8, INTS9/RC74, INTS10, INTS11/CPSF3L, INTS12, INTS13, INTS14 and INTS15. The core complex associates with protein phosphatase 2A subunits PPP2CA and PPP2R1A, to form the Integrator-PP2A (INTAC) complex. INTS14 is part of the tail subcomplex, composed of INTS10, INTS13, INTS14 and INTS15.

It is found in the nucleus. In terms of biological role, component of the integrator complex, a multiprotein complex that terminates RNA polymerase II (Pol II) transcription in the promoter-proximal region of genes. The integrator complex provides a quality checkpoint during transcription elongation by driving premature transcription termination of transcripts that are unfavorably configured for transcriptional elongation: the complex terminates transcription by (1) catalyzing dephosphorylation of the C-terminal domain (CTD) of Pol II subunit POLR2A/RPB1 and SUPT5H/SPT5, (2) degrading the exiting nascent RNA transcript via endonuclease activity and (3) promoting the release of Pol II from bound DNA. The integrator complex is also involved in terminating the synthesis of non-coding Pol II transcripts, such as enhancer RNAs (eRNAs), small nuclear RNAs (snRNAs), telomerase RNAs and long non-coding RNAs (lncRNAs). Within the integrator complex, INTS14 is part of the integrator tail module that acts as a platform for the recruitment of transcription factors at promoters. This is Integrator complex subunit 14 from Gallus gallus (Chicken).